A 316-amino-acid polypeptide reads, in one-letter code: Myb-related protein 306 (316 aa).

HTH myb-type domains are found at residues lysine 9–isoleucine 65 and lysine 66–leucine 116. DNA-binding regions (H-T-H motif) lie at residues tryptophan 37–leucine 61 and tryptophan 89–leucine 112. 3 disordered regions span residues leucine 119–glutamine 144, lysine 168–threonine 193, and lysine 209–serine 230. Basic and acidic residues predominate over residues aspartate 135 to glutamine 144. The span at valine 181–threonine 193 shows a compositional bias: polar residues. The segment covering serine 216 to serine 230 has biased composition (low complexity).

As to expression, expressed in flowers, leaves and weakly in seed pods.

It localises to the nucleus. Its function is as follows. Transcription factor. The sequence is that of Myb-related protein 306 from Antirrhinum majus (Garden snapdragon).